Reading from the N-terminus, the 311-residue chain is Pyrimidine-specific ribonucleoside hydrolase RihA (311 aa).

H240 is a catalytic residue.

It belongs to the IUNH family. RihA subfamily.

Hydrolyzes cytidine or uridine to ribose and cytosine or uracil, respectively. This Salmonella typhimurium (strain LT2 / SGSC1412 / ATCC 700720) protein is Pyrimidine-specific ribonucleoside hydrolase RihA.